Reading from the N-terminus, the 405-residue chain is Phosphoglycerate kinase (405 aa).

Substrate contacts are provided by residues 24–26 (DFN), arginine 40, 63–66 (HLGR), arginine 122, and arginine 162. ATP is bound by residues lysine 213, glutamate 332, and 361 to 364 (GGDS).

It belongs to the phosphoglycerate kinase family. As to quaternary structure, monomer.

It is found in the cytoplasm. It catalyses the reaction (2R)-3-phosphoglycerate + ATP = (2R)-3-phospho-glyceroyl phosphate + ADP. It functions in the pathway carbohydrate degradation; glycolysis; pyruvate from D-glyceraldehyde 3-phosphate: step 2/5. This chain is Phosphoglycerate kinase, found in Corynebacterium diphtheriae (strain ATCC 700971 / NCTC 13129 / Biotype gravis).